The chain runs to 142 residues: Protein NIM1-INTERACTING 1 (142 aa).

Positions 47 to 53 (DTFFKLI) are involved in NPR1/NIM1 interaction. The Nuclear localization signal signature appears at 60–64 (RKRRR). 2 disordered regions span residues 63 to 86 (RREE…RSGI) and 108 to 142 (MFVS…NLAL). The stretch at 110–141 (VSDHKEENTKVEQEEDQTEERNEDKALDLNLA) forms a coiled coil. Residues 111–121 (SDHKEENTKVE) are compositionally biased toward basic and acidic residues.

The protein belongs to the NPR1-interactor family. Interacts with NPR1 C-terminal region.

It localises to the nucleus. The polypeptide is Protein NIM1-INTERACTING 1 (Arabidopsis thaliana (Mouse-ear cress)).